The sequence spans 839 residues: Putative AC9 transposase (839 aa).

Residues 32–43 (SSSNANGTATDP) show a composition bias toward polar residues. Residues 32-85 (SSSNANGTATDPSQDDMAIVHEPQPQPQPQPEPQPQPQPEPEEEAPQKRAKKCT) are disordered. Pro residues predominate over residues 55 to 70 (QPQPQPQPEPQPQPQP).

In Zea mays (Maize), this protein is Putative AC9 transposase.